The following is an 89-amino-acid chain: Small ribosomal subunit protein uS15 (89 aa).

Belongs to the universal ribosomal protein uS15 family. Part of the 30S ribosomal subunit. Forms a bridge to the 50S subunit in the 70S ribosome, contacting the 23S rRNA.

In terms of biological role, one of the primary rRNA binding proteins, it binds directly to 16S rRNA where it helps nucleate assembly of the platform of the 30S subunit by binding and bridging several RNA helices of the 16S rRNA. Its function is as follows. Forms an intersubunit bridge (bridge B4) with the 23S rRNA of the 50S subunit in the ribosome. This Ligilactobacillus salivarius (strain UCC118) (Lactobacillus salivarius) protein is Small ribosomal subunit protein uS15.